The following is a 187-amino-acid chain: Ribosome maturation factor RimM (187 aa).

Residues 1 to 17 (MTSTPSPSTADPNSTND) are compositionally biased toward polar residues. The segment at 1-21 (MTSTPSPSTADPNSTNDWLPV) is disordered. The PRC barrel domain maps to 111–184 (EGEFHLLDLV…WLLLTPPPGL (74 aa)).

The protein belongs to the RimM family. In terms of assembly, binds ribosomal protein uS19.

The protein localises to the cytoplasm. An accessory protein needed during the final step in the assembly of 30S ribosomal subunit, possibly for assembly of the head region. Essential for efficient processing of 16S rRNA. May be needed both before and after RbfA during the maturation of 16S rRNA. It has affinity for free ribosomal 30S subunits but not for 70S ribosomes. The sequence is that of Ribosome maturation factor RimM from Synechococcus sp. (strain CC9311).